The sequence spans 104 residues: Large ribosomal subunit protein bL21 (104 aa).

The protein belongs to the bacterial ribosomal protein bL21 family. In terms of assembly, part of the 50S ribosomal subunit. Contacts protein L20.

Its function is as follows. This protein binds to 23S rRNA in the presence of protein L20. This chain is Large ribosomal subunit protein bL21, found in Streptococcus equi subsp. equi (strain 4047).